A 370-amino-acid chain; its full sequence is Cyclic dehypoxanthine futalosine synthase (370 aa).

The 246-residue stretch at 50-295 (TTFVIGRNVN…QSSWVTMGPE (246 aa)) folds into the Radical SAM core domain. Cys64, Cys68, and Cys71 together coordinate [4Fe-4S] cluster.

This sequence belongs to the radical SAM superfamily. MqnC family. [4Fe-4S] cluster is required as a cofactor.

It carries out the reaction dehypoxanthine futalosine + S-adenosyl-L-methionine = cyclic dehypoxanthinylfutalosinate + 5'-deoxyadenosine + L-methionine + H(+). It functions in the pathway quinol/quinone metabolism; menaquinone biosynthesis. In terms of biological role, radical SAM enzyme that catalyzes the cyclization of dehypoxanthine futalosine (DHFL) into cyclic dehypoxanthine futalosine (CDHFL), a step in the biosynthesis of menaquinone (MK, vitamin K2). This Halalkalibacterium halodurans (strain ATCC BAA-125 / DSM 18197 / FERM 7344 / JCM 9153 / C-125) (Bacillus halodurans) protein is Cyclic dehypoxanthine futalosine synthase.